The chain runs to 492 residues: 5-taurinomethyluridine-[tRNA] synthase subunit GTPB3, mitochondrial (492 aa).

The transit peptide at 1–20 (MWRGLWTLAAQAARGPRRLC) directs the protein to the mitochondrion. 5,10-methylenetetrahydrofolate is bound by residues Arg-52, Glu-112, and Lys-152. One can recognise a TrmE-type G domain in the interval 249-416 (GVHVVVTGPP…LLEALRKELA (168 aa)). Residues 256–263 (GPPNAGKS), 282–286 (GTTRD), 303–306 (DTAG), 374–377 (NKSD), and 397–399 (SCL) each bind GTP. Residue Asn-259 coordinates K(+). Mg(2+)-binding residues include Ser-263 and Thr-284. A 5,10-methylenetetrahydrofolate-binding site is contributed by Lys-492.

It belongs to the TRAFAC class TrmE-Era-EngA-EngB-Septin-like GTPase superfamily. TrmE GTPase family. As to quaternary structure, homodimer; forms a dimer in the presence of potassium. Interacts with MTO1; forms the GTPBP3-MTO1 complex composed of homodimers of GTPBP3 and MTO1. Homodimer, forms homodimer in vivo. It depends on K(+) as a cofactor. Ubiquitously expressed.

It is found in the mitochondrion. Its subcellular location is the cytoplasm. It catalyses the reaction GTP + H2O = GDP + phosphate + H(+). Functionally, GTPase component of the GTPBP3-MTO1 complex that catalyzes the 5-taurinomethyluridine (taum(5)U) modification at the 34th wobble position (U34) of mitochondrial tRNAs (mt-tRNAs), which plays a role in mt-tRNA decoding and mitochondrial translation. Taum(5)U formation on mammalian mt-tRNA requires the presence of both GTPBP3-mediated GTPase activity and MTO1 catalytic activity. The protein is 5-taurinomethyluridine-[tRNA] synthase subunit GTPB3, mitochondrial of Homo sapiens (Human).